The following is a 248-amino-acid chain: Probable uridine-cytidine kinase (248 aa).

An ATP-binding site is contributed by 15–23 (GGTSCGKST). Positions 73, 101, 154, 164, and 172 each coordinate substrate. Residue aspartate 201 participates in ATP binding. Residues 224 to 248 (SDEEEEKENELVKQGSFRRPFSRPH) are disordered.

Belongs to the uridine kinase family.

It carries out the reaction uridine + ATP = UMP + ADP + H(+). It catalyses the reaction cytidine + ATP = CMP + ADP + H(+). The protein operates within pyrimidine metabolism; CTP biosynthesis via salvage pathway; CTP from cytidine: step 1/3. Its pathway is pyrimidine metabolism; UMP biosynthesis via salvage pathway; UMP from uridine: step 1/1. The protein is Probable uridine-cytidine kinase of Caenorhabditis elegans.